Consider the following 270-residue polypeptide: Protein-ADP-ribose hydrolase (270 aa).

Residues V73–N267 form the Macro domain. ADP-D-ribose-binding residues include D92, I93, and N106. Residues C112, H117, and C119 each coordinate Zn(2+). ADP-D-ribose-binding residues include C119, I120, D121, S212, T213, G214, E215, and F216.

This sequence belongs to the MacroD-type family. Zn-Macro subfamily. In terms of assembly, monomer. Interacts with the lipoylated form of GcvH-L. It depends on Zn(2+) as a cofactor.

The catalysed reaction is 4-O-(ADP-D-ribosyl)-L-aspartyl-[protein] + H2O = L-aspartyl-[protein] + ADP-D-ribose + H(+). It catalyses the reaction 5-O-(ADP-D-ribosyl)-L-glutamyl-[protein] + H2O = L-glutamyl-[protein] + ADP-D-ribose + H(+). The enzyme catalyses S-(ADP-D-ribosyl)-L-cysteinyl-[protein] + H2O = ADP-D-ribose + L-cysteinyl-[protein]. ADP-ribosylhydrolase that specifically reverses the SirTM-mediated mono-ADP-ribosylation at an asparatate residue of GcvH-L (SpyM50867), by releasing ADP-ribose from the target protein. May play a role in the regulation of the response to host-induced oxidative stress. It can also hydrolyze ADP-ribosyl-glutamate bonds and ADP-ribosyl-cysteine bonds. In vitro, it can remove the ADP-ribosyl modification from the human mono-ADP-ribosylated PARP1 E988Q mutant, which is primarily modified on glutamate site with only minor aspartate contribution. It can also hydrolyze the ADP-ribosyl-cysteinyl glycosidic bond of a Cys-ADP-ribosylated synthetic peptide. This chain is Protein-ADP-ribose hydrolase, found in Streptococcus pyogenes serotype M5 (strain Manfredo).